The chain runs to 216 residues: ATP-dependent Clp protease proteolytic subunit (216 aa).

Catalysis depends on Ser101, which acts as the Nucleophile. His126 is a catalytic residue.

This sequence belongs to the peptidase S14 family. Component of the chloroplastic Clp protease core complex.

Its subcellular location is the plastid. The protein localises to the chloroplast stroma. The enzyme catalyses Hydrolysis of proteins to small peptides in the presence of ATP and magnesium. alpha-casein is the usual test substrate. In the absence of ATP, only oligopeptides shorter than five residues are hydrolyzed (such as succinyl-Leu-Tyr-|-NHMec, and Leu-Tyr-Leu-|-Tyr-Trp, in which cleavage of the -Tyr-|-Leu- and -Tyr-|-Trp bonds also occurs).. Its function is as follows. Cleaves peptides in various proteins in a process that requires ATP hydrolysis. Has a chymotrypsin-like activity. Plays a major role in the degradation of misfolded proteins. The polypeptide is ATP-dependent Clp protease proteolytic subunit (Triticum aestivum (Wheat)).